Reading from the N-terminus, the 539-residue chain is Chaperonin GroEL (539 aa).

ATP-binding positions include 29 to 32, 86 to 90, Gly413, 477 to 479, and Asp493; these read TLGP, DGTTT, and NAA.

The protein belongs to the chaperonin (HSP60) family. As to quaternary structure, forms a cylinder of 14 subunits composed of two heptameric rings stacked back-to-back. Interacts with the co-chaperonin GroES.

It localises to the cytoplasm. It carries out the reaction ATP + H2O + a folded polypeptide = ADP + phosphate + an unfolded polypeptide.. Its function is as follows. Together with its co-chaperonin GroES, plays an essential role in assisting protein folding. The GroEL-GroES system forms a nano-cage that allows encapsulation of the non-native substrate proteins and provides a physical environment optimized to promote and accelerate protein folding. The protein is Chaperonin GroEL of Clavibacter michiganensis subsp. michiganensis (strain NCPPB 382).